Reading from the N-terminus, the 342-residue chain is Holliday junction branch migration complex subunit RuvB (342 aa).

The interval 1–185 (MREDYLKSDD…FGINARLEYY (185 aa)) is large ATPase domain (RuvB-L). Residues L24, R25, G66, K69, T70, T71, 132–134 (EDY), R175, Y185, and R222 contribute to the ATP site. T70 serves as a coordination point for Mg(2+). The tract at residues 186-256 (DAKLLTRIVQ…IARIALQALN (71 aa)) is small ATPAse domain (RuvB-S). Residues 259–342 (HNGLDDMDNR…PPAQSGTLFE (84 aa)) are head domain (RuvB-H). Positions 314 and 319 each coordinate DNA.

This sequence belongs to the RuvB family. In terms of assembly, homohexamer. Forms an RuvA(8)-RuvB(12)-Holliday junction (HJ) complex. HJ DNA is sandwiched between 2 RuvA tetramers; dsDNA enters through RuvA and exits via RuvB. An RuvB hexamer assembles on each DNA strand where it exits the tetramer. Each RuvB hexamer is contacted by two RuvA subunits (via domain III) on 2 adjacent RuvB subunits; this complex drives branch migration. In the full resolvosome a probable DNA-RuvA(4)-RuvB(12)-RuvC(2) complex forms which resolves the HJ.

The protein localises to the cytoplasm. It catalyses the reaction ATP + H2O = ADP + phosphate + H(+). Functionally, the RuvA-RuvB-RuvC complex processes Holliday junction (HJ) DNA during genetic recombination and DNA repair, while the RuvA-RuvB complex plays an important role in the rescue of blocked DNA replication forks via replication fork reversal (RFR). RuvA specifically binds to HJ cruciform DNA, conferring on it an open structure. The RuvB hexamer acts as an ATP-dependent pump, pulling dsDNA into and through the RuvAB complex. RuvB forms 2 homohexamers on either side of HJ DNA bound by 1 or 2 RuvA tetramers; 4 subunits per hexamer contact DNA at a time. Coordinated motions by a converter formed by DNA-disengaged RuvB subunits stimulates ATP hydrolysis and nucleotide exchange. Immobilization of the converter enables RuvB to convert the ATP-contained energy into a lever motion, pulling 2 nucleotides of DNA out of the RuvA tetramer per ATP hydrolyzed, thus driving DNA branch migration. The RuvB motors rotate together with the DNA substrate, which together with the progressing nucleotide cycle form the mechanistic basis for DNA recombination by continuous HJ branch migration. Branch migration allows RuvC to scan DNA until it finds its consensus sequence, where it cleaves and resolves cruciform DNA. This Cytophaga hutchinsonii (strain ATCC 33406 / DSM 1761 / CIP 103989 / NBRC 15051 / NCIMB 9469 / D465) protein is Holliday junction branch migration complex subunit RuvB.